The following is a 114-amino-acid chain: Large ribosomal subunit protein bL19 (114 aa).

This sequence belongs to the bacterial ribosomal protein bL19 family.

This protein is located at the 30S-50S ribosomal subunit interface and may play a role in the structure and function of the aminoacyl-tRNA binding site. The polypeptide is Large ribosomal subunit protein bL19 (Clostridium botulinum (strain Loch Maree / Type A3)).